Consider the following 402-residue polypeptide: Peptidyl-prolyl cis-trans isomerase FKBP8 (402 aa).

Over residues 28–39 (DGVDDAEEEDDL) the composition is skewed to acidic residues. Residues 28-54 (DGVDDAEEEDDLSGLPPLEDMGQPTVE) are disordered. A PPIase FKBP-type domain is found at 110–194 (GQVVTVHLQM…CLEVTLKTAE (85 aa)). The stretch at 211 to 244 (ANRKRECGNAHYQRADFVLAANSYDLAIKAITSN) is one TPR 1 repeat. Residues Lys239, Lys261, Lys263, and Lys274 each participate in a glycyl lysine isopeptide (Lys-Gly) (interchain with G-Cter in ubiquitin) cross-link. TPR repeat units follow at residues 262–295 (VKCL…QPDN) and 296–329 (IKAL…EPSN). Ser286 carries the post-translational modification Phosphoserine. Glycyl lysine isopeptide (Lys-Gly) (interchain with G-Cter in ubiquitin) cross-links involve residues Lys297, Lys304, Lys324, Lys330, Lys338, Lys341, and Lys342. A helical transmembrane segment spans residues 380 to 400 (WLFGATAVALGGVALSVVIAA).

As to quaternary structure, homomultimers or heteromultimers (Potential). Forms heterodimer with calmodulin. When activated by calmodulin and calcium, interacts with the BH4 domain of BCL2 and weakly with BCLX isoform Bcl-X(L). Does not bind and inhibit calcineurin. Interacts with ZFYVE27; may negatively regulate ZFYVE27 phosphorylation. Requires Ca(2+) as cofactor. Ubiquitinated by PRKN during mitophagy, leading to its degradation and enhancement of mitophagy. Deubiquitinated by USP30. As to expression, detected throughout the embryonic body, in caudal neural tube, limbs and head. Detected in adult retina, brain, heart, kidney, liver, pancreas, lung, testis and urinary bladder (at protein level). Detected in adult brain, kidney, liver, testis and trigeminal nerve, and in embryo. Detected at lower levels in lung, spleen, heart and ovary. Widely expressed in forebrain. Detected in the Purkinje cell layer in the cerebellum and in hippocampus neurons.

It is found in the mitochondrion membrane. The enzyme catalyses [protein]-peptidylproline (omega=180) = [protein]-peptidylproline (omega=0). In terms of biological role, constitutively inactive PPiase, which becomes active when bound to calmodulin and calcium. Seems to act as a chaperone for BCL2, targets it to the mitochondria and modulates its phosphorylation state. The BCL2/FKBP8/calmodulin/calcium complex probably interferes with the binding of BCL2 to its targets. The active form of FKBP8 may therefore play a role in the regulation of apoptosis. Required for normal embryonic development. The chain is Peptidyl-prolyl cis-trans isomerase FKBP8 (Fkbp8) from Mus musculus (Mouse).